Here is a 281-residue protein sequence, read N- to C-terminus: 18S rRNA (guanine-N(7))-methyltransferase (281 aa).

Residues 256 to 281 (KARRRRQGKEVCPDTQYTGRKRKPRF) form a disordered region.

The protein belongs to the class I-like SAM-binding methyltransferase superfamily. BUD23/WBSCR22 family. In terms of assembly, heterodimer with TRMT112; this heterodimerization is necessary for the metabolic stability and activity of the catalytic subunit BUD23. Interacts with GRIP1. In terms of processing, may be ubiquitinated and targeted to degradation in response to pro-inflammatory cytokine signaling.

It localises to the nucleus. It is found in the nucleoplasm. The protein resides in the cytoplasm. Its subcellular location is the perinuclear region. It carries out the reaction a guanosine in 18S rRNA + S-adenosyl-L-methionine = an N(7)-methylguanosine in 18S rRNA + S-adenosyl-L-homocysteine. Functionally, S-adenosyl-L-methionine-dependent methyltransferase that specifically methylates the N(7) position of a guanine in 18S rRNA. Requires the methyltransferase adapter protein TRM112 for full rRNA methyltransferase activity. Involved in the pre-rRNA processing steps leading to small-subunit rRNA production independently of its RNA-modifying catalytic activity. Important for biogenesis end export of the 40S ribosomal subunit independent on its methyltransferase activity. Locus-specific steroid receptor coactivator. Potentiates transactivation by glucocorticoid (NR3C1), mineralocorticoid (NR3C2), androgen (AR) and progesterone (PGR) receptors. Required for the maintenance of open chromatin at the TSC22D3/GILZ locus to facilitate NR3C1 loading on the response elements. Required for maintenance of dimethylation on histone H3 'Lys-79' (H3K79me2), although direct histone methyltransferase activity is not observed in vitro. The protein is 18S rRNA (guanine-N(7))-methyltransferase of Bos taurus (Bovine).